A 490-amino-acid polypeptide reads, in one-letter code: Bifunctional protein HldE (490 aa).

Positions 1-330 (MNNFDTLLQS…RKILPHASLA (330 aa)) are ribokinase. 205–208 (NRKE) provides a ligand contact to ATP. Aspartate 275 is a catalytic residue. The segment at 358 to 490 (FTNGCFDILH…LVEKAREGTS (133 aa)) is cytidylyltransferase.

This sequence in the N-terminal section; belongs to the carbohydrate kinase PfkB family. The protein in the C-terminal section; belongs to the cytidylyltransferase family. As to quaternary structure, homodimer.

The catalysed reaction is D-glycero-beta-D-manno-heptose 7-phosphate + ATP = D-glycero-beta-D-manno-heptose 1,7-bisphosphate + ADP + H(+). It carries out the reaction D-glycero-beta-D-manno-heptose 1-phosphate + ATP + H(+) = ADP-D-glycero-beta-D-manno-heptose + diphosphate. It participates in nucleotide-sugar biosynthesis; ADP-L-glycero-beta-D-manno-heptose biosynthesis; ADP-L-glycero-beta-D-manno-heptose from D-glycero-beta-D-manno-heptose 7-phosphate: step 1/4. The protein operates within nucleotide-sugar biosynthesis; ADP-L-glycero-beta-D-manno-heptose biosynthesis; ADP-L-glycero-beta-D-manno-heptose from D-glycero-beta-D-manno-heptose 7-phosphate: step 3/4. In terms of biological role, catalyzes the phosphorylation of D-glycero-D-manno-heptose 7-phosphate at the C-1 position to selectively form D-glycero-beta-D-manno-heptose-1,7-bisphosphate. Catalyzes the ADP transfer from ATP to D-glycero-beta-D-manno-heptose 1-phosphate, yielding ADP-D-glycero-beta-D-manno-heptose. The polypeptide is Bifunctional protein HldE (Rhodopseudomonas palustris (strain HaA2)).